A 600-amino-acid polypeptide reads, in one-letter code: NADH-quinone oxidoreductase subunit C/D (600 aa).

The NADH dehydrogenase I subunit C stretch occupies residues 1–190; the sequence is MVNNMTDLTA…SPFELTKAKQ (190 aa). The tract at residues 214–600 is NADH dehydrogenase I subunit D; sequence DFMFLNLGPN…IDFVMSDVDR (387 aa).

The protein in the N-terminal section; belongs to the complex I 30 kDa subunit family. It in the C-terminal section; belongs to the complex I 49 kDa subunit family. In terms of assembly, NDH-1 is composed of 13 different subunits. Subunits NuoB, CD, E, F, and G constitute the peripheral sector of the complex.

The protein resides in the cell inner membrane. The catalysed reaction is a quinone + NADH + 5 H(+)(in) = a quinol + NAD(+) + 4 H(+)(out). In terms of biological role, NDH-1 shuttles electrons from NADH, via FMN and iron-sulfur (Fe-S) centers, to quinones in the respiratory chain. The immediate electron acceptor for the enzyme in this species is believed to be ubiquinone. Couples the redox reaction to proton translocation (for every two electrons transferred, four hydrogen ions are translocated across the cytoplasmic membrane), and thus conserves the redox energy in a proton gradient. The polypeptide is NADH-quinone oxidoreductase subunit C/D (Shigella boydii serotype 18 (strain CDC 3083-94 / BS512)).